The chain runs to 473 residues: Ribulose bisphosphate carboxylase large chain 1 (473 aa).

Residues N116 and T166 each coordinate substrate. K168 (proton acceptor) is an active-site residue. K170 provides a ligand contact to substrate. 3 residues coordinate Mg(2+): K194, D196, and E197. K194 is subject to N6-carboxylysine. Residue H287 is the Proton acceptor of the active site. Positions 288, 320, and 372 each coordinate substrate.

It belongs to the RuBisCO large chain family. Type I subfamily. As to quaternary structure, heterohexadecamer of 8 large chains and 8 small chains. Requires Mg(2+) as cofactor.

The enzyme catalyses 2 (2R)-3-phosphoglycerate + 2 H(+) = D-ribulose 1,5-bisphosphate + CO2 + H2O. The catalysed reaction is D-ribulose 1,5-bisphosphate + O2 = 2-phosphoglycolate + (2R)-3-phosphoglycerate + 2 H(+). Its function is as follows. RuBisCO catalyzes two reactions: the carboxylation of D-ribulose 1,5-bisphosphate, the primary event in carbon dioxide fixation, as well as the oxidative fragmentation of the pentose substrate. Both reactions occur simultaneously and in competition at the same active site. This Acidithiobacillus ferrooxidans (strain ATCC 23270 / DSM 14882 / CIP 104768 / NCIMB 8455) (Ferrobacillus ferrooxidans (strain ATCC 23270)) protein is Ribulose bisphosphate carboxylase large chain 1.